We begin with the raw amino-acid sequence, 432 residues long: Histidinol dehydrogenase (432 aa).

Residues Y133, Q194, and N217 each coordinate NAD(+). S240, Q262, and H265 together coordinate substrate. Zn(2+)-binding residues include Q262 and H265. Catalysis depends on proton acceptor residues E330 and H331. The substrate site is built by H331, D364, E418, and H423. D364 contributes to the Zn(2+) binding site. H423 contributes to the Zn(2+) binding site.

The protein belongs to the histidinol dehydrogenase family. Zn(2+) serves as cofactor.

It carries out the reaction L-histidinol + 2 NAD(+) + H2O = L-histidine + 2 NADH + 3 H(+). It participates in amino-acid biosynthesis; L-histidine biosynthesis; L-histidine from 5-phospho-alpha-D-ribose 1-diphosphate: step 9/9. Functionally, catalyzes the sequential NAD-dependent oxidations of L-histidinol to L-histidinaldehyde and then to L-histidine. This is Histidinol dehydrogenase from Nitrosomonas europaea (strain ATCC 19718 / CIP 103999 / KCTC 2705 / NBRC 14298).